Reading from the N-terminus, the 424-residue chain is Putative fasciclin-like arabinogalactan protein 20 (424 aa).

The helical transmembrane segment at 46-66 (LLTTFFLIFFVLDIDLVATSM) threads the bilayer. Residues 56–194 (VLDIDLVATS…YVVIYGSDEF (139 aa)) form the FAS1 1 domain. Residues Asn-153 and Asn-160 are each glycosylated (N-linked (GlcNAc...) asparagine). Residues 199-226 (TKISDDSSSSSSIPSTTSSTGSIPIPSS) are compositionally biased toward low complexity. The interval 199–246 (TKISDDSSSSSSIPSTTSSTGSIPIPSSATQTPPSPNIASDSTRNLPN) is disordered. The segment covering 227–246 (ATQTPPSPNIASDSTRNLPN) has biased composition (polar residues). Asn-246, Asn-283, and Asn-287 each carry an N-linked (GlcNAc...) asparagine glycan. The FAS1 2 domain occupies 250–384 (PVNRFNIFES…IAVHGFNQMI (135 aa)). The interval 405–424 (QEEEGVHGEYSSELGDYGLH) is disordered.

It belongs to the fasciclin-like AGP family.

It localises to the membrane. May be a cell surface adhesion protein. The sequence is that of Putative fasciclin-like arabinogalactan protein 20 (FLA20) from Arabidopsis thaliana (Mouse-ear cress).